Reading from the N-terminus, the 213-residue chain is Probable nicotinate-nucleotide adenylyltransferase (213 aa).

The protein belongs to the NadD family.

The enzyme catalyses nicotinate beta-D-ribonucleotide + ATP + H(+) = deamido-NAD(+) + diphosphate. It participates in cofactor biosynthesis; NAD(+) biosynthesis; deamido-NAD(+) from nicotinate D-ribonucleotide: step 1/1. Functionally, catalyzes the reversible adenylation of nicotinate mononucleotide (NaMN) to nicotinic acid adenine dinucleotide (NaAD). In Shigella boydii serotype 18 (strain CDC 3083-94 / BS512), this protein is Probable nicotinate-nucleotide adenylyltransferase.